A 745-amino-acid polypeptide reads, in one-letter code: AP-3 complex subunit beta (745 aa).

Phosphoserine is present on S638. Positions 674-745 are disordered; it reads YASETSESSE…TEPEPNYWQS (72 aa). Residues 680-718 are compositionally biased toward acidic residues; it reads ESSEGEYETSTSESEDEETDDTSQEEDNEKNSTPDEDTE.

This sequence belongs to the adaptor complexes large subunit family. As to quaternary structure, adaptor protein complex 3 (AP-3) is a heterotetramer composed of 2 large adaptins (apl5 and apl6), a medium adaptin (apm3) and a small adaptin (aps3).

It localises to the golgi apparatus. Its subcellular location is the cytoplasmic vesicle. The protein resides in the clathrin-coated vesicle membrane. Functionally, adaptins are components of the adaptor complexes which link clathrin to receptors in coated vesicles. Clathrin-associated protein complexes are believed to interact with the cytoplasmic tails of membrane proteins, leading to their selection and concentration. Beta adaptin is a subunit of the plasma membrane adaptor. In Schizosaccharomyces pombe (strain 972 / ATCC 24843) (Fission yeast), this protein is AP-3 complex subunit beta (apl6).